Consider the following 195-residue polypeptide: Ureidoglycolate lyase (195 aa).

Belongs to the ureidoglycolate lyase family. In terms of assembly, homodimer.

The enzyme catalyses (S)-ureidoglycolate = urea + glyoxylate. Its pathway is nitrogen metabolism; (S)-allantoin degradation. In terms of biological role, catalyzes the catabolism of the allantoin degradation intermediate (S)-ureidoglycolate, generating urea and glyoxylate. Involved in the utilization of allantoin as secondary nitrogen source when primary sources are limiting. The chain is Ureidoglycolate lyase (DAL3) from Saccharomyces cerevisiae (strain ATCC 204508 / S288c) (Baker's yeast).